The primary structure comprises 912 residues: Probable dipeptidyl-aminopeptidase B (912 aa).

Disordered regions lie at residues 1–30 (MAAEKGGSSDEERKPLTRGSMEYRDSSNSL) and 48–68 (NGSTHDTGPDEIGRGDRDYSD). At 1–92 (MAAEKGGSSD…GGKPVQKKVK (92 aa)) the chain is on the cytoplasmic side. Composition is skewed to basic and acidic residues over residues 7–25 (GSSDEERKPLTRGSMEYRD) and 54–67 (TGPDEIGRGDRDYS). Residues 93–113 (IVLGFLLFLCLSGWSLAFVLF) traverse the membrane as a helical; Signal-anchor for type II membrane protein segment. Over 114-912 (LFGGHESSKT…RAATWVGMSI (799 aa)) the chain is Vacuolar. Residues N130, N210, N346, N569, and N656 are each glycosylated (N-linked (GlcNAc...) asparagine). Catalysis depends on S751, which acts as the Charge relay system. An N-linked (GlcNAc...) asparagine glycan is attached at N810. Residues D828 and H861 each act as charge relay system in the active site. N897 carries N-linked (GlcNAc...) asparagine glycosylation.

This sequence belongs to the peptidase S9B family.

The protein resides in the vacuole membrane. The catalysed reaction is Release of an N-terminal dipeptide, Xaa-Yaa-|-Zaa-, from a polypeptide, preferentially when Yaa is Pro, provided Zaa is neither Pro nor hydroxyproline.. Its function is as follows. Type IV dipeptidyl-peptidase which removes N-terminal dipeptides sequentially from polypeptides having unsubstituted N-termini provided that the penultimate residue is proline. The protein is Probable dipeptidyl-aminopeptidase B (DAPB) of Paracoccidioides brasiliensis (strain Pb18).